The primary structure comprises 431 residues: Glutamate-1-semialdehyde 2,1-aminomutase (431 aa).

N6-(pyridoxal phosphate)lysine is present on Lys-269.

This sequence belongs to the class-III pyridoxal-phosphate-dependent aminotransferase family. HemL subfamily. As to quaternary structure, homodimer. It depends on pyridoxal 5'-phosphate as a cofactor.

The protein resides in the cytoplasm. It catalyses the reaction (S)-4-amino-5-oxopentanoate = 5-aminolevulinate. It participates in porphyrin-containing compound metabolism; protoporphyrin-IX biosynthesis; 5-aminolevulinate from L-glutamyl-tRNA(Glu): step 2/2. The sequence is that of Glutamate-1-semialdehyde 2,1-aminomutase from Francisella tularensis subsp. holarctica (strain LVS).